The primary structure comprises 158 residues: Eukaryotic translation initiation factor 5A-1 (158 aa).

The segment covering 1 to 10 (MSDEEHHFES) has biased composition (basic and acidic residues). Residues 1 to 21 (MSDEEHHFESSDAGASKTYPQ) form a disordered region. S2 carries the phosphoserine modification. The residue at position 51 (K51) is a Hypusine.

The protein belongs to the eIF-5A family. Post-translationally, lys-51 undergoes hypusination, a unique post-translational modification that consists in the addition of a butylamino group from spermidine to lysine side chain, leading to the formation of the unusual amino acid hypusine. eIF-5As are the only known proteins to undergo this modification, which is essential for their function. As to expression, expressed in leaf vasculature and inflorescence stems. Present in xylem tissue but not in phloem, and in developing vessel members, but not in mature vessels members. Detected in anthers.

Functionally, translation factor that promotes translation elongation and termination, particularly upon ribosome stalling at specific amino acid sequence contexts. Binds between the exit (E) and peptidyl (P) site of the ribosome and promotes rescue of stalled ribosome: specifically required for efficient translation of polyproline-containing peptides as well as other motifs that stall the ribosome. Acts as a ribosome quality control (RQC) cofactor by joining the RQC complex to facilitate peptidyl transfer during CAT tailing step. Involved in xylogenesis. This Arabidopsis thaliana (Mouse-ear cress) protein is Eukaryotic translation initiation factor 5A-1 (ELF5A-1).